The chain runs to 847 residues: Phenylalanine--tRNA ligase beta subunit (847 aa).

Positions 40 to 168 constitute a tRNA-binding domain; the sequence is FGIEGPVVVG…LDPEVGADAV (129 aa). The B5 domain occupies 426 to 501; it reads ADAEPIRLPD…RIVGFDRIPS (76 aa). Positions 479, 485, 488, and 489 each coordinate Mg(2+). The FDX-ACB domain maps to 753-846; sequence AGFPAATQDL…AGQLFGAAIR (94 aa).

The protein belongs to the phenylalanyl-tRNA synthetase beta subunit family. Type 1 subfamily. In terms of assembly, tetramer of two alpha and two beta subunits. The cofactor is Mg(2+).

It is found in the cytoplasm. It catalyses the reaction tRNA(Phe) + L-phenylalanine + ATP = L-phenylalanyl-tRNA(Phe) + AMP + diphosphate + H(+). This chain is Phenylalanine--tRNA ligase beta subunit, found in Leifsonia xyli subsp. xyli (strain CTCB07).